The sequence spans 230 residues: UPF0502 protein Patl_1161 (230 aa).

This sequence belongs to the UPF0502 family.

This is UPF0502 protein Patl_1161 from Pseudoalteromonas atlantica (strain T6c / ATCC BAA-1087).